Consider the following 673-residue polypeptide: B3 domain-containing protein Os01g0905400 (673 aa).

A compositionally biased stretch (basic and acidic residues) spans 1 to 34 (MVELIKVPKIEQEEGNADSHGKEKADVVHEEKTE). Residues 1-44 (MVELIKVPKIEQEEGNADSHGKEKADVVHEEKTEKVKRRRKRVS) form a disordered region. Positions 79–172 (LPSFFKIMVG…VFTVQIFAIS (94 aa)) form a DNA-binding region, TF-B3 1. The disordered stretch occupies residues 315–337 (PSFSYPESSNVMTADKESERSHQ). Residues 328–337 (ADKESERSHQ) show a composition bias toward basic and acidic residues. Residues 576–671 (SKKFCITIPP…ELSFQVLVPN (96 aa)) constitute a DNA-binding region (TF-B3 2).

The protein resides in the nucleus. This chain is B3 domain-containing protein Os01g0905400, found in Oryza sativa subsp. japonica (Rice).